The primary structure comprises 1093 residues: Non-canonical non-ribosomal peptide synthetase ascB (1093 aa).

Over residues 1-26 (MTVNGHHTNGVNGANGTNGHANGSNG) the composition is skewed to low complexity. Residues 1–27 (MTVNGHHTNGVNGANGTNGHANGSNGI) form a disordered region. The interval 35–392 (EIVPFVKPQV…LSLTFAPTDN (358 aa)) is adenylation (A) domain. One can recognise a Carrier domain in the interval 591 to 678 (DNLEQNLKSL…EIAAALTKGS (88 aa)). Position 627 is an O-(pantetheine 4'-phosphoryl)serine (Ser627). Residues 721 to 971 (LTGATGSLGS…IPVDDAASTV (251 aa)) form a thioester reductase (TR) domain region.

This sequence belongs to the NRP synthetase family.

The enzyme catalyses ilicicolinate B + AH2 + ATP = ilicicolin B + A + AMP + diphosphate. It participates in secondary metabolite biosynthesis; terpenoid biosynthesis. Functionally, non-canonical non-ribosomal peptide synthetase; part of the asc-1 gene cluster that mediates the biosynthesis of both ascochlorin and ascofuranone, a strong inhibitor of cyanide-insensitive alternative oxidases and a promising drug candidate against African trypanosomiasis. The first step in the pathway is performed by the non-reducing polyketide synthase ascC that produces orsellinic acid by condensing acetyl-CoA with 3 malonyl-CoA units. Orsellinic acid is then prenylated by the prenyltransferase ascA to yield ilicicolinic acid B. Ilicicolinic acid B is further reduced to ilicicolin B by the reductase ascB. The halogenase ascD then chlorinates ilicicolin B to produce ilicicolin A which is converted to ilicicolin A epoxide by the cytochrome P450 monooxygenase ascE that catalyzes stereoselective epoxidation of the terminal double bond of the prenyl group. Ilicicolin A epoxide is the last common precursor for the biosynthesis of ascofuranone and ascochlorin. The terpene cyclase ascF produces a monocyclic terpene, and the cyclization reaction is proposed to be initiated by protonation of the terminal epoxide of ilicicolin A epoxide to generate a monocyclic tertiarycation, which is followed by a series of hydride and methyl shifts with abstraction of proton, leading to the formation of the (14S,15R,19R)-trimethylcyclohexanone ring structure of ilicicolin C, which is finally reduced to ascochlorin by the dehydrogenase ascG. On the other hand, ilicicolin A epoxide is hydroxylated by the cytochrome P450 monooxygenase ascH, and the resultant product is cyclized by the terpene cyclase ascI to ascofuranol via protonation-initiated epoxide ring opening, which facilitates the 6-endo-tet cyclization to form the tetrahy-drofuran ring. Finally, ascofuranol is oxidized into ascofuranone by ascJ. The polypeptide is Non-canonical non-ribosomal peptide synthetase ascB (Acremonium egyptiacum (Oospora egyptiaca)).